Reading from the N-terminus, the 114-residue chain is Phosphorelay protein LuxU (114 aa).

The HPt domain occupies 19–114 (GSDNVPVLLD…TRDAYRSWTN (96 aa)). His-58 bears the Phosphohistidine mark.

Monomer.

Phosphorelay protein which receives sensory signals from LuxN and LuxP and transmits them to LuxO, at low cell density. LuxN and LuxP transfer a phosphoryl group to LuxU on His-58 and this phosphoryl group is further transferred to LuxO. At high cell density, as LuxU could function to establish an equilibrium between the aspartyl-phosphate of LuxN and the aspartyl-phosphate of LuxO, LuxU transfers phosphate from LuxO to LuxN (and probably LuxP) and finally phosphate is drained from the system. The protein is Phosphorelay protein LuxU (luxU) of Vibrio harveyi (Beneckea harveyi).